The following is a 76-amino-acid chain: DNA-directed RNA polymerase subunit omega (76 aa).

The protein belongs to the RNA polymerase subunit omega family. In terms of assembly, in cyanobacteria the RNAP catalytic core is composed of 2 alpha, 1 beta, 1 beta', 1 gamma and 1 omega subunit. When a sigma factor is associated with the core the holoenzyme is formed, which can initiate transcription.

The catalysed reaction is RNA(n) + a ribonucleoside 5'-triphosphate = RNA(n+1) + diphosphate. Promotes RNA polymerase assembly. Latches the N- and C-terminal regions of the beta' subunit thereby facilitating its interaction with the beta and alpha subunits. This Acaryochloris marina (strain MBIC 11017) protein is DNA-directed RNA polymerase subunit omega.